Consider the following 131-residue polypeptide: MSHIPANLRYTDSHEWVLDNGDGTVTIGITDHAQEALGDVVFVELPETGRELDAGEEFGVIESVKAASDLYLPLSGEIIAVNESLEDAPETVNDNPYEDGWIIKLKLAEPEALESLLDATAYDALVSAEED.

The region spanning 24 to 106 (TVTIGITDHA…YEDGWIIKLK (83 aa)) is the Lipoyl-binding domain. K65 carries the N6-lipoyllysine modification.

Belongs to the GcvH family. The glycine cleavage system is composed of four proteins: P, T, L and H. (R)-lipoate is required as a cofactor.

The glycine cleavage system catalyzes the degradation of glycine. The H protein shuttles the methylamine group of glycine from the P protein to the T protein. This is Glycine cleavage system H protein from Chromohalobacter salexigens (strain ATCC BAA-138 / DSM 3043 / CIP 106854 / NCIMB 13768 / 1H11).